The primary structure comprises 110 residues: MATIFDILNTLNNNNFENCKRQCSTNKSNKTIIDILPPMDVTITNDKLIIETELAGISKDQIEIDIKDSILTIQGERKDLNKQHNNNNNNNNNNNNLVIEKSTSTSSTFR.

The region spanning K30–R110 is the sHSP domain. Positions K78–R110 are disordered. Residues N85–N96 show a composition bias toward low complexity. Residues K101 to R110 are compositionally biased toward polar residues.

Belongs to the small heat shock protein (HSP20) family.

This is Small heat shock protein hspG11 (hspG11) from Dictyostelium discoideum (Social amoeba).